The primary structure comprises 369 residues: Transcription initiation factor IIA large subunit (369 aa).

Polar residues-rich tracts occupy residues 113–210 and 218–233; these read HGNS…QNSP and TESSNTTPANSRNDVP. Residues 113-248 form a disordered region; the sequence is HGNSNYYSPP…IHDLDDAGSP (136 aa). Residue Ser249 is modified to Phosphoserine. The interval 282–319 is disordered; that stretch reads IEDNEDEKKPPVDTPSDEAINSDLDDPDSDEAPETEEG. A compositionally biased stretch (acidic residues) spans 304–319; it reads DLDDPDSDEAPETEEG.

It belongs to the TFIIA subunit 1 family. In terms of assembly, TFIIA is a heterodimer of the large subunit and the small subunit gamma.

Its subcellular location is the nucleus. Its function is as follows. TFIIA is a component of the transcription machinery of RNA polymerase II and plays an important role in transcriptional activation. TFIIA in a complex with tbp mediates transcriptional activity. The protein is Transcription initiation factor IIA large subunit of Schizosaccharomyces pombe (strain 972 / ATCC 24843) (Fission yeast).